The primary structure comprises 143 residues: Transcription antitermination protein NusB (143 aa).

This sequence belongs to the NusB family.

Its function is as follows. Involved in transcription antitermination. Required for transcription of ribosomal RNA (rRNA) genes. Binds specifically to the boxA antiterminator sequence of the ribosomal RNA (rrn) operons. In Streptomyces griseus subsp. griseus (strain JCM 4626 / CBS 651.72 / NBRC 13350 / KCC S-0626 / ISP 5235), this protein is Transcription antitermination protein NusB.